Reading from the N-terminus, the 151-residue chain is 3-dehydroquinate dehydratase (151 aa).

The active-site Proton acceptor is the Tyr-24. Substrate is bound by residues Asn-76, His-82, and Asp-89. Residue His-102 is the Proton donor of the active site. Residues 103 to 104 (VS) and Arg-113 each bind substrate.

The protein belongs to the type-II 3-dehydroquinase family. As to quaternary structure, homododecamer.

The enzyme catalyses 3-dehydroquinate = 3-dehydroshikimate + H2O. It participates in metabolic intermediate biosynthesis; chorismate biosynthesis; chorismate from D-erythrose 4-phosphate and phosphoenolpyruvate: step 3/7. Catalyzes a trans-dehydration via an enolate intermediate. This chain is 3-dehydroquinate dehydratase, found in Rhodopseudomonas palustris (strain ATCC BAA-98 / CGA009).